The following is a 502-amino-acid chain: Probable cytosol aminopeptidase (502 aa).

Mn(2+)-binding residues include K269 and D274. K281 is a catalytic residue. D292, D351, and E353 together coordinate Mn(2+). The active site involves R355.

It belongs to the peptidase M17 family. It depends on Mn(2+) as a cofactor.

The protein localises to the cytoplasm. The enzyme catalyses Release of an N-terminal amino acid, Xaa-|-Yaa-, in which Xaa is preferably Leu, but may be other amino acids including Pro although not Arg or Lys, and Yaa may be Pro. Amino acid amides and methyl esters are also readily hydrolyzed, but rates on arylamides are exceedingly low.. It catalyses the reaction Release of an N-terminal amino acid, preferentially leucine, but not glutamic or aspartic acids.. Its function is as follows. Presumably involved in the processing and regular turnover of intracellular proteins. Catalyzes the removal of unsubstituted N-terminal amino acids from various peptides. The chain is Probable cytosol aminopeptidase from Shewanella denitrificans (strain OS217 / ATCC BAA-1090 / DSM 15013).